A 438-amino-acid polypeptide reads, in one-letter code: tRNA-dihydrouridine(16/17) synthase [NAD(P)(+)]-like (438 aa).

Residues 23-25 (PMV) and Gln-79 contribute to the FMN site. Cys-108 functions as the Proton donor in the catalytic mechanism. Residues Lys-147, His-175, 208-210 (NGN), and 232-233 (AE) contribute to the FMN site. The interval 343-387 (GPKEGSKENSSGRSKRALEEEEGSMEGLSKNKLKKQLRNPHKTFD) is disordered. Residues 373–383 (NKLKKQLRNPH) are compositionally biased toward basic residues.

This sequence belongs to the Dus family. Dus1 subfamily. The cofactor is FMN.

It is found in the cytoplasm. Its subcellular location is the nucleus. It catalyses the reaction 5,6-dihydrouridine(16) in tRNA + NADP(+) = uridine(16) in tRNA + NADPH + H(+). The catalysed reaction is 5,6-dihydrouridine(16) in tRNA + NAD(+) = uridine(16) in tRNA + NADH + H(+). The enzyme catalyses 5,6-dihydrouridine(17) in tRNA + NAD(+) = uridine(17) in tRNA + NADH + H(+). It carries out the reaction 5,6-dihydrouridine(17) in tRNA + NADP(+) = uridine(17) in tRNA + NADPH + H(+). Functionally, catalyzes the synthesis of dihydrouridine, a modified base found in the D-loop of most tRNAs. Specifically modifies U16 and U17 in cytoplasmic tRNAs. Affects the level of some mature tRNA and thereby the total cellular translation. The polypeptide is tRNA-dihydrouridine(16/17) synthase [NAD(P)(+)]-like (Dus1l) (Rattus norvegicus (Rat)).